Reading from the N-terminus, the 103-residue chain is Large ribosomal subunit protein bL21 (103 aa).

The protein belongs to the bacterial ribosomal protein bL21 family. As to quaternary structure, part of the 50S ribosomal subunit. Contacts protein L20.

This protein binds to 23S rRNA in the presence of protein L20. The chain is Large ribosomal subunit protein bL21 from Pasteurella multocida (strain Pm70).